A 98-amino-acid polypeptide reads, in one-letter code: UPF0235 protein Mmc1_3654 (98 aa).

This sequence belongs to the UPF0235 family.

This is UPF0235 protein Mmc1_3654 from Magnetococcus marinus (strain ATCC BAA-1437 / JCM 17883 / MC-1).